We begin with the raw amino-acid sequence, 565 residues long: Dihydroxy-acid dehydratase (565 aa).

D80 lines the Mg(2+) pocket. C121 is a binding site for [2Fe-2S] cluster. Mg(2+)-binding residues include D122 and K123. K123 is subject to N6-carboxylysine. A [2Fe-2S] cluster-binding site is contributed by C194. E447 contributes to the Mg(2+) binding site. S473 (proton acceptor) is an active-site residue.

Belongs to the IlvD/Edd family. Homodimer. The cofactor is [2Fe-2S] cluster. Mg(2+) serves as cofactor.

The catalysed reaction is (2R)-2,3-dihydroxy-3-methylbutanoate = 3-methyl-2-oxobutanoate + H2O. It carries out the reaction (2R,3R)-2,3-dihydroxy-3-methylpentanoate = (S)-3-methyl-2-oxopentanoate + H2O. The protein operates within amino-acid biosynthesis; L-isoleucine biosynthesis; L-isoleucine from 2-oxobutanoate: step 3/4. It functions in the pathway amino-acid biosynthesis; L-valine biosynthesis; L-valine from pyruvate: step 3/4. In terms of biological role, functions in the biosynthesis of branched-chain amino acids. Catalyzes the dehydration of (2R,3R)-2,3-dihydroxy-3-methylpentanoate (2,3-dihydroxy-3-methylvalerate) into 2-oxo-3-methylpentanoate (2-oxo-3-methylvalerate) and of (2R)-2,3-dihydroxy-3-methylbutanoate (2,3-dihydroxyisovalerate) into 2-oxo-3-methylbutanoate (2-oxoisovalerate), the penultimate precursor to L-isoleucine and L-valine, respectively. In Pelodictyon phaeoclathratiforme (strain DSM 5477 / BU-1), this protein is Dihydroxy-acid dehydratase.